The following is a 130-amino-acid chain: Small ribosomal subunit protein uS9 (130 aa).

The protein belongs to the universal ribosomal protein uS9 family.

The chain is Small ribosomal subunit protein uS9 from Pseudomonas fluorescens (strain SBW25).